The following is a 94-amino-acid chain: Cell division topological specificity factor (94 aa).

It belongs to the MinE family.

Its function is as follows. Prevents the cell division inhibition by proteins MinC and MinD at internal division sites while permitting inhibition at polar sites. This ensures cell division at the proper site by restricting the formation of a division septum at the midpoint of the long axis of the cell. The chain is Cell division topological specificity factor from Acetivibrio thermocellus (strain ATCC 27405 / DSM 1237 / JCM 9322 / NBRC 103400 / NCIMB 10682 / NRRL B-4536 / VPI 7372) (Clostridium thermocellum).